An 888-amino-acid polypeptide reads, in one-letter code: Transmembrane channel-like protein 2 (888 aa).

The segment at 1–128 is disordered; that stretch reads MSPQLKSLDE…SLGSSVSTGD (128 aa). The Cytoplasmic portion of the chain corresponds to 1 to 228; the sequence is MSPQLKSLDE…KIKDIESHFG (228 aa). Basic and acidic residues-rich tracts occupy residues 7 to 16, 32 to 44, and 87 to 110; these read SLDEEGDKSA, DGHR…KDPA, and RTSL…EAGK. Polar residues predominate over residues 117–128; it reads STSLGSSVSTGD. Residues 229–266 traverse the membrane as a helical segment; sequence SSVASYFIFLRWMYGVNLVLFGLIFGLVIIPEVLMGMP. At 267-317 the chain is on the extracellular side; it reads YGSIPRKTVPRAEEERAMDFSVLWDFEGYIKYSALFYGYYNNQRTIGWLRY. A helical membrane pass occupies residues 318–350; the sequence is RLPMAYFMVGVSVFGYSLMIVIRSMASNTQGST. The Cytoplasmic portion of the chain corresponds to 351–406; the sequence is SEGDSDSFTFSFKMFTSWDYLIGNSETADNKYVSITTSFKESIVDEQESNKEGNIH. A helical transmembrane segment spans residues 407–437; the sequence is LTRFLRVLANFLILCCLCGSGYLIYFVVKRS. Residues 438–447 are Extracellular-facing; that stretch reads QEFSKMQNVS. A helical transmembrane segment spans residues 448-475; that stretch reads WYERNEVEIVMSLLGMFCPPLFETIAAL. The Cytoplasmic portion of the chain corresponds to 476–479; that stretch reads ENYH. A helical transmembrane segment spans residues 480–514; that stretch reads PRTGLKWQLGRIFALFLGNLYTFLLALMDDVHLKL. The Extracellular segment spans residues 515–556; that stretch reads SNEEKIKNITHWTLFNYYNSSGGNESVPRPPPHPADVPRGSC. A helical transmembrane segment spans residues 557-594; sequence WETAVGIEFMRLTVSDMLVTYLTILVGDFLRACFVRFM. Residues 595–613 lie on the Cytoplasmic side of the membrane; sequence NHCWCWDLEAGFPSYAEFD. A helical membrane pass occupies residues 614–634; sequence ISGNVLGLIFNQGMIWMGSFY. Residues 635–637 lie on the Extracellular side of the membrane; the sequence is APG. The helical transmembrane segment at 638 to 660 threads the bilayer; that stretch reads LVGINVLRLLTSMYFQCWAVMSS. Over 661-674 the chain is Cytoplasmic; that stretch reads NVPHERVFKASRSN. The chain crosses the membrane as a helical span at residues 675 to 698; the sequence is NFYMGLLLLVLFLSLLPVAYTVMS. The Extracellular portion of the chain corresponds to 699–741; sequence LPPSFDCGPFSGKNRMYDVLHETIENDFPKFLGKIFAFLANPG. Residues 742–775 traverse the membrane as a helical segment; sequence LIIPAILLMFLAIYYLNSVSKSLSRANAQLRKKI. Topologically, residues 776-888 are cytoplasmic; that stretch reads QALREVEKNH…SGKRTQRPHN (113 aa). The interval 813–888 is disordered; the sequence is LTKEEPTSHS…SGKRTQRPHN (76 aa). Composition is skewed to polar residues over residues 836–851 and 866–881; these read PHTS…STSW and GQPQ…PSGK.

The protein belongs to the TMC family. As to quaternary structure, forms the MET channel composed of TMC dimer (TMC1 or TMC2), TMIE, TOMT, CIB (CIB2 or CIB3), LHFPL5 and PDH15. The interaction of TMC1 and TMC2 with TOMT is required for the transportation of TMC1/2 into the stereocilia of hair cells. Interacts (via N-terminus) with both isoforms CD1 and CD3 of PCDH15. Can form a heterodimer with TMC1, TMC5 or TMC7. Inner ear and testis. Expressed in cochlear inner and outer hair cells and vestibular organ hair cells.

The protein localises to the cell membrane. The catalysed reaction is Ca(2+)(in) = Ca(2+)(out). Its function is as follows. Pore-forming subunit of the mechanotransducer (MET) non-selective cation channel complex located at the tips of stereocilia of cochlear hair cells and that mediates sensory transduction in the auditory system. The MET complex is composed of two dimeric pore-forming ion-conducting transmembrane TMC (TMC1 or TMC2) subunits, several auxiliary proteins including LHFPL5, TMIE, CIB2/3 and TOMT, the tip-link PCDH15, and possibly the PIEZO subunits. MET channel is activated by tension in the tip-link extending from the side wall of one stereocilium to the tip of the adjacent shorter stereocilium, where the channel is located. TMC2 MET channel is highly permeable to calcium and likely transports monovalent cations. Also involved in vestibular hair cell transduction current of the mammalian inner ear. This Mus musculus (Mouse) protein is Transmembrane channel-like protein 2.